We begin with the raw amino-acid sequence, 220 residues long: Redox-sensing transcriptional repressor Rex (220 aa).

A DNA-binding region (H-T-H motif) is located at residues 25–64 (WYLSNVKLLKQKGERYVSSTQISKEINIDASQIAKDLSYV). 99 to 104 (GVGSLG) contributes to the NAD(+) binding site.

Belongs to the transcriptional regulatory Rex family. As to quaternary structure, homodimer.

The protein resides in the cytoplasm. Modulates transcription in response to changes in cellular NADH/NAD(+) redox state. This is Redox-sensing transcriptional repressor Rex from Bacteroides fragilis (strain ATCC 25285 / DSM 2151 / CCUG 4856 / JCM 11019 / LMG 10263 / NCTC 9343 / Onslow / VPI 2553 / EN-2).